A 179-amino-acid chain; its full sequence is Inner membrane-spanning protein YciB (179 aa).

The next 5 membrane-spanning stretches (helical) occupy residues 22 to 42 (IYAA…YSWV), 50 to 70 (MALI…FFHN), 76 to 96 (WKVT…QWVM), 121 to 141 (LAWA…AFWL), and 149 to 169 (FKVF…GIYI).

The protein belongs to the YciB family.

The protein resides in the cell inner membrane. Functionally, plays a role in cell envelope biogenesis, maintenance of cell envelope integrity and membrane homeostasis. The polypeptide is Inner membrane-spanning protein YciB (Escherichia coli O127:H6 (strain E2348/69 / EPEC)).